A 316-amino-acid polypeptide reads, in one-letter code: MDARKNGVLITGGAGFIGKALITEMVERQIPLVSFDISDKPDSLPELSEYFNWYKFSYLESSQRIKELHEIVSRHNIKTVIHLATTMFPHESKKNIDKDCLENVYANVCFFKNLYENGCEKIIFASSGGTVYGKSDTPFSEDDALLPEISYGLSKVMTETYLRFIAKELNGKSISLRISNPYGEGQRIDGKQGVIPIFLNKISNDIPIDIIGSIESKRDYIYISDLVQAFMCSLEYEGHEDIFNIGSGESITLKKLIETIEFKLNKKAVIGFQDPIHTNANGIILDIKRAMAELGWRPTVVLDDGIDKLIKSIRCK.

NAD(+) is bound at residue 16–17; it reads FI. Tyr-151 acts as the Proton acceptor in catalysis. An NAD(+)-binding site is contributed by Lys-155.

It belongs to the NAD(P)-dependent epimerase/dehydratase family.

The enzyme catalyses dTDP-alpha-D-fucose + NAD(+) = dTDP-4-dehydro-6-deoxy-alpha-D-glucose + NADH + H(+). It carries out the reaction dTDP-alpha-D-fucose + NADP(+) = dTDP-4-dehydro-6-deoxy-alpha-D-glucose + NADPH + H(+). The protein operates within bacterial outer membrane biogenesis; LPS O-antigen biosynthesis. With respect to regulation, inhibited by Cu(2+), while other divalent cations such as Ca(2+), Co(2+), Fe(2+), Mn(2+) and Mg(2+) have no obvious effects on enzyme activity. Its function is as follows. Catalyzes the stereospecific reduction of the C-4 keto group of dTDP-4-dehydro-6-deoxy-D-glucose, leading to dTDP-D-fucopyranose. This is a step in the biosynthesis of D-fucofuranose, a component of E.coli O52 O antigen. Is more efficient using NADH than NADPH as cosubstrate. The chain is dTDP-4-dehydro-6-deoxyglucose reductase (fcf1) from Escherichia coli.